The sequence spans 152 residues: Ribosomal RNA large subunit methyltransferase H (152 aa).

S-adenosyl-L-methionine is bound by residues L70, G101, and 120 to 125 (LSDLTF).

Belongs to the RNA methyltransferase RlmH family. As to quaternary structure, homodimer.

Its subcellular location is the cytoplasm. The catalysed reaction is pseudouridine(1915) in 23S rRNA + S-adenosyl-L-methionine = N(3)-methylpseudouridine(1915) in 23S rRNA + S-adenosyl-L-homocysteine + H(+). In terms of biological role, specifically methylates the pseudouridine at position 1915 (m3Psi1915) in 23S rRNA. This is Ribosomal RNA large subunit methyltransferase H from Pseudothermotoga lettingae (strain ATCC BAA-301 / DSM 14385 / NBRC 107922 / TMO) (Thermotoga lettingae).